The primary structure comprises 43 residues: Protein PsbN (43 aa).

A helical membrane pass occupies residues 5–27 (TLVAISISGLLVSFTGYALYTAF).

Belongs to the PsbN family.

The protein localises to the plastid. It localises to the chloroplast thylakoid membrane. In terms of biological role, may play a role in photosystem I and II biogenesis. The polypeptide is Protein PsbN (Coelogyne cristata (Orchid)).